Consider the following 163-residue polypeptide: Meiotically up-regulated gene 109 protein (163 aa).

A run of 4 helical transmembrane segments spans residues 61–78, 82–104, 114–134, and 136–156; these read YRFY…FFIW, ALLA…SLTI, YSIP…APVG, and LFWS…LTTY.

The protein localises to the membrane. Its function is as follows. Has a role in meiosis. The polypeptide is Meiotically up-regulated gene 109 protein (mug109) (Schizosaccharomyces pombe (strain 972 / ATCC 24843) (Fission yeast)).